A 637-amino-acid chain; its full sequence is Threonine--tRNA ligase (637 aa).

In terms of domain architecture, TGS spans 1 to 61 (MLNITLPDCS…VEDSAVQIIT (61 aa)). The interval 242–533 (DHRKLGKQLD…LIENHAGSFP (292 aa)) is catalytic. The Zn(2+) site is built by Cys-333, His-384, and His-510.

The protein belongs to the class-II aminoacyl-tRNA synthetase family. In terms of assembly, homodimer. Zn(2+) serves as cofactor.

It is found in the cytoplasm. The enzyme catalyses tRNA(Thr) + L-threonine + ATP = L-threonyl-tRNA(Thr) + AMP + diphosphate + H(+). Functionally, catalyzes the attachment of threonine to tRNA(Thr) in a two-step reaction: L-threonine is first activated by ATP to form Thr-AMP and then transferred to the acceptor end of tRNA(Thr). Also edits incorrectly charged L-seryl-tRNA(Thr). The sequence is that of Threonine--tRNA ligase from Neisseria gonorrhoeae (strain ATCC 700825 / FA 1090).